Reading from the N-terminus, the 150-residue chain is Anti-sigma F factor (150 aa).

The protein belongs to the anti-sigma-factor family.

It catalyses the reaction L-seryl-[protein] + ATP = O-phospho-L-seryl-[protein] + ADP + H(+). The enzyme catalyses L-threonyl-[protein] + ATP = O-phospho-L-threonyl-[protein] + ADP + H(+). Functionally, binds to sigma F and blocks its ability to form an RNA polymerase holoenzyme (E-sigma F). Phosphorylates SpoIIAA on a serine residue. This phosphorylation may enable SpoIIAA to act as an anti-anti-sigma factor that counteracts SpoIIAB and thus releases sigma F from inhibition. This Pasteuria penetrans protein is Anti-sigma F factor.